A 476-amino-acid chain; its full sequence is PRAME family member 5 (476 aa).

An LRR 1; degenerate repeat occupies 97-124; the sequence is RWKLQVLDLQDVCENFWMVWSEAMAHGC. The LRR 2; degenerate repeat unit spans residues 179–203; the sequence is HLCCKKLKILGMPFRNIRSILKMVN. The stretch at 204 to 230 is one LRR 3; degenerate repeat; the sequence is LDCIQEVEVNCKWVLPILTQFTPYLGH. One copy of the LRR 4; degenerate repeat lies at 231-266; sequence MRNLQKLVLSHMDVSRYVSPEQKKEIVTQFTTQFLK. LRR repeat units follow at residues 267–292, 293–324, 325–345, 349–376, and 377–401; these read LCCLQKLSMNSVSFLEGHLDQLLSCL, KTSLKVLTITNCVLLESDLKHLSQCPSISQLK, TLDLSGIRLTNYSLVPLQILL, AATLEYLDLDDCGIIDSQVNAILPALSR, and CFELNTFSFCGNPISMATLENLLSH.

It belongs to the PRAME family.

In Homo sapiens (Human), this protein is PRAME family member 5.